We begin with the raw amino-acid sequence, 369 residues long: L-lactate oxidase (369 aa).

The region spanning 13–369 (EKKLNVLNLD…KNAKLLNIRY (357 aa)) is the FMN hydroxy acid dehydrogenase domain. Y39 is a binding site for pyruvate. Residues 92 to 94 (PAA), S121, and Q143 contribute to the FMN site. Y145 contacts pyruvate. FMN is bound at residue T171. R180 contributes to the pyruvate binding site. 2 residues coordinate FMN: K240 and S262. Residues H264 and R267 each coordinate pyruvate. The Proton acceptor role is filled by H264. FMN is bound by residues 295–299 (DSGIR) and R319.

Belongs to the FMN-dependent alpha-hydroxy acid dehydrogenase family. As to quaternary structure, homotetramer. The cofactor is FMN.

The enzyme catalyses (S)-lactate + O2 = pyruvate + H2O2. Its function is as follows. Catalyzes the oxidation of (S)-lactate (L-lactate) to pyruvate, with a reduction of O2 to H2O2. May be involved in the utilization of L-lactate as an energy source for growth. The polypeptide is L-lactate oxidase (Lentilactobacillus hilgardii (strain ATCC 8290 / DSM 20176 / CCUG 30140 / JCM 1155 / KCTC 3500 / NBRC 15886 / NCIMB 8040 / NRRL B-1843 / 9)).